The sequence spans 193 residues: Segregation and condensation protein B (193 aa).

This sequence belongs to the ScpB family. Homodimer. Homodimerization may be required to stabilize the binding of ScpA to the Smc head domains. Component of a cohesin-like complex composed of ScpA, ScpB and the Smc homodimer, in which ScpA and ScpB bind to the head domain of Smc. The presence of the three proteins is required for the association of the complex with DNA.

The protein localises to the cytoplasm. In terms of biological role, participates in chromosomal partition during cell division. May act via the formation of a condensin-like complex containing Smc and ScpA that pull DNA away from mid-cell into both cell halves. In Clostridium botulinum (strain Kyoto / Type A2), this protein is Segregation and condensation protein B.